Here is a 492-residue protein sequence, read N- to C-terminus: UDP-N-acetylmuramoyl-L-alanyl-D-glutamate--2,6-diaminopimelate ligase (492 aa).

Serine 30 is a UDP-N-acetyl-alpha-D-muramoyl-L-alanyl-D-glutamate binding site. An ATP-binding site is contributed by 114 to 120 (GTNGKTS). UDP-N-acetyl-alpha-D-muramoyl-L-alanyl-D-glutamate contacts are provided by residues 156 to 157 (TT), serine 183, glutamine 189, and arginine 191. An N6-carboxylysine modification is found at lysine 223. Meso-2,6-diaminopimelate contacts are provided by residues arginine 389, 413-416 (DNPR), glycine 462, and glutamate 466. The Meso-diaminopimelate recognition motif motif lies at 413–416 (DNPR).

The protein belongs to the MurCDEF family. MurE subfamily. Mg(2+) is required as a cofactor. In terms of processing, carboxylation is probably crucial for Mg(2+) binding and, consequently, for the gamma-phosphate positioning of ATP.

Its subcellular location is the cytoplasm. The catalysed reaction is UDP-N-acetyl-alpha-D-muramoyl-L-alanyl-D-glutamate + meso-2,6-diaminopimelate + ATP = UDP-N-acetyl-alpha-D-muramoyl-L-alanyl-gamma-D-glutamyl-meso-2,6-diaminopimelate + ADP + phosphate + H(+). The protein operates within cell wall biogenesis; peptidoglycan biosynthesis. Catalyzes the addition of meso-diaminopimelic acid to the nucleotide precursor UDP-N-acetylmuramoyl-L-alanyl-D-glutamate (UMAG) in the biosynthesis of bacterial cell-wall peptidoglycan. The chain is UDP-N-acetylmuramoyl-L-alanyl-D-glutamate--2,6-diaminopimelate ligase from Neisseria meningitidis serogroup B (strain ATCC BAA-335 / MC58).